A 572-amino-acid chain; its full sequence is Proline--tRNA ligase (572 aa).

It belongs to the class-II aminoacyl-tRNA synthetase family. ProS type 1 subfamily. In terms of assembly, homodimer.

It is found in the cytoplasm. The catalysed reaction is tRNA(Pro) + L-proline + ATP = L-prolyl-tRNA(Pro) + AMP + diphosphate. Catalyzes the attachment of proline to tRNA(Pro) in a two-step reaction: proline is first activated by ATP to form Pro-AMP and then transferred to the acceptor end of tRNA(Pro). As ProRS can inadvertently accommodate and process non-cognate amino acids such as alanine and cysteine, to avoid such errors it has two additional distinct editing activities against alanine. One activity is designated as 'pretransfer' editing and involves the tRNA(Pro)-independent hydrolysis of activated Ala-AMP. The other activity is designated 'posttransfer' editing and involves deacylation of mischarged Ala-tRNA(Pro). The misacylated Cys-tRNA(Pro) is not edited by ProRS. This Escherichia coli O7:K1 (strain IAI39 / ExPEC) protein is Proline--tRNA ligase.